A 329-amino-acid polypeptide reads, in one-letter code: Aspartate carbamoyltransferase catalytic subunit (329 aa).

Carbamoyl phosphate is bound by residues R66 and T67. K94 contributes to the L-aspartate binding site. 3 residues coordinate carbamoyl phosphate: R116, H149, and Q152. Residues R189 and R243 each contribute to the L-aspartate site. G284 and P285 together coordinate carbamoyl phosphate.

It belongs to the aspartate/ornithine carbamoyltransferase superfamily. ATCase family. In terms of assembly, heterododecamer (2C3:3R2) of six catalytic PyrB chains organized as two trimers (C3), and six regulatory PyrI chains organized as three dimers (R2).

It catalyses the reaction carbamoyl phosphate + L-aspartate = N-carbamoyl-L-aspartate + phosphate + H(+). It functions in the pathway pyrimidine metabolism; UMP biosynthesis via de novo pathway; (S)-dihydroorotate from bicarbonate: step 2/3. In terms of biological role, catalyzes the condensation of carbamoyl phosphate and aspartate to form carbamoyl aspartate and inorganic phosphate, the committed step in the de novo pyrimidine nucleotide biosynthesis pathway. The polypeptide is Aspartate carbamoyltransferase catalytic subunit (Gloeobacter violaceus (strain ATCC 29082 / PCC 7421)).